A 1071-amino-acid chain; its full sequence is Carbamoyl phosphate synthase large chain (1071 aa).

The carboxyphosphate synthetic domain stretch occupies residues 1-399 (MPKREDIKKV…SLLKAFKSLD (399 aa)). Arginine 129, arginine 169, glycine 175, glycine 176, glutamate 208, valine 210, glutamate 215, glycine 241, valine 242, histidine 243, glutamine 284, and glutamate 296 together coordinate ATP. Positions 133–325 (KETMLRIGEK…IARVTAKIAI (193 aa)) constitute an ATP-grasp 1 domain. Residues glutamine 284, glutamate 296, and asparagine 298 each contribute to the Mg(2+) site. The Mn(2+) site is built by glutamine 284, glutamate 296, and asparagine 298. The tract at residues 400–540 (IDNQLGNKHW…YSTYEDSCET (141 aa)) is oligomerization domain. The carbamoyl phosphate synthetic domain stretch occupies residues 541–932 (NATTDKKKIL…YKAELAADNV (392 aa)). Residues 673-864 (YILMKELGVP…LAKIAAKVIA (192 aa)) form the ATP-grasp 2 domain. Residues arginine 709, aspartate 748, leucine 750, glutamate 755, glycine 780, valine 781, histidine 782, serine 783, glutamine 823, and glutamate 835 each coordinate ATP. The Mg(2+) site is built by glutamine 823, glutamate 835, and asparagine 837. Residues glutamine 823, glutamate 835, and asparagine 837 each coordinate Mn(2+). The region spanning 931–1071 (NVLPLTGKVF…INEYHKEMEN (141 aa)) is the MGS-like domain. The interval 933 to 1071 (LPLTGKVFLS…INEYHKEMEN (139 aa)) is allosteric domain.

The protein belongs to the CarB family. As to quaternary structure, composed of two chains; the small (or glutamine) chain promotes the hydrolysis of glutamine to ammonia, which is used by the large (or ammonia) chain to synthesize carbamoyl phosphate. Tetramer of heterodimers (alpha,beta)4. It depends on Mg(2+) as a cofactor. Mn(2+) is required as a cofactor.

The catalysed reaction is hydrogencarbonate + L-glutamine + 2 ATP + H2O = carbamoyl phosphate + L-glutamate + 2 ADP + phosphate + 2 H(+). The enzyme catalyses hydrogencarbonate + NH4(+) + 2 ATP = carbamoyl phosphate + 2 ADP + phosphate + 2 H(+). Its pathway is amino-acid biosynthesis; L-arginine biosynthesis; carbamoyl phosphate from bicarbonate: step 1/1. The protein operates within pyrimidine metabolism; UMP biosynthesis via de novo pathway; (S)-dihydroorotate from bicarbonate: step 1/3. Functionally, large subunit of the glutamine-dependent carbamoyl phosphate synthetase (CPSase). CPSase catalyzes the formation of carbamoyl phosphate from the ammonia moiety of glutamine, carbonate, and phosphate donated by ATP, constituting the first step of 2 biosynthetic pathways, one leading to arginine and/or urea and the other to pyrimidine nucleotides. The large subunit (synthetase) binds the substrates ammonia (free or transferred from glutamine from the small subunit), hydrogencarbonate and ATP and carries out an ATP-coupled ligase reaction, activating hydrogencarbonate by forming carboxy phosphate which reacts with ammonia to form carbamoyl phosphate. This Methanosarcina barkeri (strain Fusaro / DSM 804) protein is Carbamoyl phosphate synthase large chain.